Here is a 579-residue protein sequence, read N- to C-terminus: DNA ligase 1 (579 aa).

E244 is an ATP binding site. Residue K246 is the N6-AMP-lysine intermediate of the active site. Residues R251, R266, E296, F342, R419, and K425 each contribute to the ATP site.

This sequence belongs to the ATP-dependent DNA ligase family. Mg(2+) serves as cofactor.

It catalyses the reaction ATP + (deoxyribonucleotide)n-3'-hydroxyl + 5'-phospho-(deoxyribonucleotide)m = (deoxyribonucleotide)n+m + AMP + diphosphate.. DNA ligase that seals nicks in double-stranded DNA during DNA replication, DNA recombination and DNA repair. In Methanosarcina mazei (strain ATCC BAA-159 / DSM 3647 / Goe1 / Go1 / JCM 11833 / OCM 88) (Methanosarcina frisia), this protein is DNA ligase 1.